The sequence spans 242 residues: 1-(5-phosphoribosyl)-5-[(5-phosphoribosylamino)methylideneamino] imidazole-4-carboxamide isomerase (242 aa).

Aspartate 10 (proton acceptor) is an active-site residue. Residue aspartate 132 is the Proton donor of the active site.

It belongs to the HisA/HisF family.

It localises to the cytoplasm. It catalyses the reaction 1-(5-phospho-beta-D-ribosyl)-5-[(5-phospho-beta-D-ribosylamino)methylideneamino]imidazole-4-carboxamide = 5-[(5-phospho-1-deoxy-D-ribulos-1-ylimino)methylamino]-1-(5-phospho-beta-D-ribosyl)imidazole-4-carboxamide. It participates in amino-acid biosynthesis; L-histidine biosynthesis; L-histidine from 5-phospho-alpha-D-ribose 1-diphosphate: step 4/9. The protein is 1-(5-phosphoribosyl)-5-[(5-phosphoribosylamino)methylideneamino] imidazole-4-carboxamide isomerase of Methanopyrus kandleri (strain AV19 / DSM 6324 / JCM 9639 / NBRC 100938).